Here is a 135-residue protein sequence, read N- to C-terminus: Flagellar assembly factor FliW 1 (135 aa).

Belongs to the FliW family. As to quaternary structure, interacts with translational regulator CsrA and flagellin(s).

Its subcellular location is the cytoplasm. Acts as an anti-CsrA protein, binds CsrA and prevents it from repressing translation of its target genes, one of which is flagellin. Binds to flagellin and participates in the assembly of the flagellum. This chain is Flagellar assembly factor FliW 1, found in Helicobacter pylori (strain ATCC 700392 / 26695) (Campylobacter pylori).